The primary structure comprises 394 residues: Phosphoglycerate kinase (394 aa).

Substrate is bound by residues 21–23 (DLN), Arg-37, 60–63 (HLGR), Arg-115, and Arg-148. ATP-binding positions include Lys-199, Glu-321, and 347 to 350 (GGDT).

It belongs to the phosphoglycerate kinase family. Monomer.

Its subcellular location is the cytoplasm. It carries out the reaction (2R)-3-phosphoglycerate + ATP = (2R)-3-phospho-glyceroyl phosphate + ADP. It participates in carbohydrate degradation; glycolysis; pyruvate from D-glyceraldehyde 3-phosphate: step 2/5. The sequence is that of Phosphoglycerate kinase from Aromatoleum aromaticum (strain DSM 19018 / LMG 30748 / EbN1) (Azoarcus sp. (strain EbN1)).